The chain runs to 149 residues: Large ribosomal subunit protein bL9 (149 aa).

It belongs to the bacterial ribosomal protein bL9 family.

In terms of biological role, binds to the 23S rRNA. This chain is Large ribosomal subunit protein bL9, found in Citrobacter koseri (strain ATCC BAA-895 / CDC 4225-83 / SGSC4696).